Consider the following 131-residue polypeptide: Large ribosomal subunit protein bL21 (131 aa).

The disordered stretch occupies residues 111 to 131 (VAAATGTADARRAAHNASAKE).

The protein belongs to the bacterial ribosomal protein bL21 family. Part of the 50S ribosomal subunit. Contacts protein L20.

Its function is as follows. This protein binds to 23S rRNA in the presence of protein L20. This is Large ribosomal subunit protein bL21 from Cereibacter sphaeroides (strain ATCC 17029 / ATH 2.4.9) (Rhodobacter sphaeroides).